Here is a 403-residue protein sequence, read N- to C-terminus: Flagellar hook protein FlgE (403 aa).

The protein belongs to the flagella basal body rod proteins family.

The protein localises to the bacterial flagellum basal body. The protein is Flagellar hook protein FlgE (flgE) of Salmonella typhi.